The sequence spans 280 residues: MPNLKGLKTEILSVKNISRITNAMQLVALAKLRKISKKVIDTHNYVSEVYSLFNDIISQVDKSVFLKDSNFETKKTLWIVINSNLGLCGGYNSNVNKLVLQNLKTNDEIFAIGSKAVSFFRSKKIKIKDQVTNIDINFTNEKAKIISNDLLAMYINREFDEIKIVYTKFINNVTFEPAIIRIFPIVKSELHFTHKQKIIFEPDADQILNNTISIYINAIIYGTVIESQVSEQASRRTAMENATNNGQNLEHELSLKYNRQRQGAITQEISEIVSGANAQS.

It belongs to the ATPase gamma chain family. In terms of assembly, F-type ATPases have 2 components, CF(1) - the catalytic core - and CF(0) - the membrane proton channel. CF(1) has five subunits: alpha(3), beta(3), gamma(1), delta(1), epsilon(1). CF(0) has three main subunits: a, b and c.

The protein resides in the cell membrane. Functionally, produces ATP from ADP in the presence of a proton gradient across the membrane. The gamma chain is believed to be important in regulating ATPase activity and the flow of protons through the CF(0) complex. The polypeptide is ATP synthase gamma chain (Mycoplasma mycoides subsp. mycoides SC (strain CCUG 32753 / NCTC 10114 / PG1)).